The sequence spans 61 residues: Small ribosomal subunit protein uS14 (61 aa).

The Zn(2+) site is built by Cys24, Cys27, Cys40, and Cys43.

Belongs to the universal ribosomal protein uS14 family. Zinc-binding uS14 subfamily. As to quaternary structure, part of the 30S ribosomal subunit. Contacts proteins S3 and S10. It depends on Zn(2+) as a cofactor.

Functionally, binds 16S rRNA, required for the assembly of 30S particles and may also be responsible for determining the conformation of the 16S rRNA at the A site. This chain is Small ribosomal subunit protein uS14, found in Mycoplasma capricolum subsp. capricolum (strain California kid / ATCC 27343 / NCTC 10154).